The following is a 516-amino-acid chain: MAKPSAPVLFFNSLSKKIENFTPIDPERVRLYSCGPTVYNFAHLGNLRAYVFTDSLRRMLNWKGYPVNHVINITDVGHLTSDSDTGDDKMEAAAHKAQKTIWDVARFYTEAFWSDLKNLNIFNPTIWSIATDHIEDMIAFARKIEEAGFTYQLDSGLYFDTSRLKEYGLLAGHREAEGVGRIETVAGKKHPADFALWRRSSPDEKRQMEWISPWGPGAPGWHLECSVMSMKYLGEQFDIHTGGIDHREIHHCNEIAQNQAFTGDQQKTGANFWLHNNFLVDRSGKMSKSKGSFLTLSTLIEAGIHPLAYRVLCLSAHYRSELEFSPDNILAALTRLKRLVIAVGQLKKKVQKKVVADGEPDWLRAFDERSFSKGAPLDYQRGLIEAPLKKEALAILERFDQAVSNDLMLPQALPLLEETLGNKKLQPEEQLRLIASMDMILGLNLLHLDRASLNIRPKNASLQENNVLALLEERQLKRKEKDFAASDAIRNRLSEAGIDVLDGDPLGWEWRPEWNA.

Cysteine 34 is a Zn(2+) binding site. A 'HIGH' region motif is present at residues 36 to 46 (PTVYNFAHLGN). 3 residues coordinate Zn(2+): cysteine 225, histidine 250, and glutamate 254. A 'KMSKS' region motif is present at residues 285–289 (KMSKS). Lysine 288 serves as a coordination point for ATP.

Belongs to the class-I aminoacyl-tRNA synthetase family. As to quaternary structure, monomer. Zn(2+) is required as a cofactor.

The protein resides in the cytoplasm. It catalyses the reaction tRNA(Cys) + L-cysteine + ATP = L-cysteinyl-tRNA(Cys) + AMP + diphosphate. The chain is Cysteine--tRNA ligase from Zymomonas mobilis subsp. mobilis (strain ATCC 31821 / ZM4 / CP4).